We begin with the raw amino-acid sequence, 189 residues long: Cancer/testis antigen family 45 member A2 (189 aa).

It belongs to the CT45 family. In terms of tissue distribution, testis specific. Expressed in cancer cell lines.

The chain is Cancer/testis antigen family 45 member A2 from Homo sapiens (Human).